A 400-amino-acid polypeptide reads, in one-letter code: Laminin subunit B (400 aa).

3 Laminin EGF-like domains span residues 1–5 (EGCKP), 6–53 (CECD…GCKS), and 54–100 (CTCN…QCIP). Cystine bridges form between Cys-6–Cys-18, Cys-8–Cys-25, Cys-27–Cys-36, Cys-39–Cys-51, Cys-54–Cys-66, Cys-56–Cys-73, Cys-75–Cys-84, and Cys-87–Cys-98. Residues 101–400 (CGECFDNWDK…AEAKNNAHEA (300 aa)) form a domain II and I region. The stretch at 140-235 (KEFEELEQVL…RENALEIQEQ (96 aa)) forms a coiled coil. Residues Asn-160, Asn-175, Asn-216, Asn-266, Asn-283, Asn-310, and Asn-356 are each glycosylated (N-linked (GlcNAc...) asparagine). Residues 353 to 400 (EAKNTSRKAEELIKSKYRSTSSTLSELENSNKQCKQATAEAKNNAHEA) are a coiled coil. Residues 369–400 (YRSTSSTLSELENSNKQCKQATAEAKNNAHEA) are disordered. A compositionally biased stretch (low complexity) spans 371–383 (STSSTLSELENSN).

Laminin is a complex glycoprotein, consisting of three different polypeptide chains (alpha, beta, gamma), which are bound to each other by disulfide bonds into a cross-shaped molecule comprising one long and three short arms with globules at each end. As to expression, individual glial and muscle cells.

The protein resides in the secreted. Its subcellular location is the extracellular space. It localises to the extracellular matrix. Binding to cells via a high affinity receptor, laminin is thought to mediate the attachment, migration and organization of cells into tissues during embryonic development by interacting with other extracellular matrix components. The protein is Laminin subunit B of Hirudo medicinalis (Medicinal leech).